The primary structure comprises 507 residues: ATP synthase subunit alpha (507 aa).

169-176 is a binding site for ATP; that stretch reads GDRQTGKT.

The protein belongs to the ATPase alpha/beta chains family. As to quaternary structure, F-type ATPases have 2 components, CF(1) - the catalytic core - and CF(0) - the membrane proton channel. CF(1) has five subunits: alpha(3), beta(3), gamma(1), delta(1), epsilon(1). CF(0) has three main subunits: a(1), b(2) and c(9-12). The alpha and beta chains form an alternating ring which encloses part of the gamma chain. CF(1) is attached to CF(0) by a central stalk formed by the gamma and epsilon chains, while a peripheral stalk is formed by the delta and b chains.

The protein localises to the cell membrane. The catalysed reaction is ATP + H2O + 4 H(+)(in) = ADP + phosphate + 5 H(+)(out). Its function is as follows. Produces ATP from ADP in the presence of a proton gradient across the membrane. The alpha chain is a regulatory subunit. This is ATP synthase subunit alpha from Desulforudis audaxviator (strain MP104C).